Reading from the N-terminus, the 46-residue chain is uncharacterized protein (46 aa).

This is an uncharacterized protein from Archaeoglobus fulgidus (strain ATCC 49558 / DSM 4304 / JCM 9628 / NBRC 100126 / VC-16).